The chain runs to 68 residues: Probable tautomerase Cj0270 (68 aa).

The Proton acceptor; via imino nitrogen role is filled by proline 2.

Belongs to the 4-oxalocrotonate tautomerase family.

This is Probable tautomerase Cj0270 from Campylobacter jejuni subsp. jejuni serotype O:2 (strain ATCC 700819 / NCTC 11168).